We begin with the raw amino-acid sequence, 482 residues long: Uric acid transporter UacT (482 aa).

Topologically, residues Met-1 to Lys-29 are cytoplasmic. A helical membrane pass occupies residues Leu-30–Leu-50. The Periplasmic segment spans residues Met-51–Ala-62. A helical transmembrane segment spans residues Ile-63–Ile-83. At Gly-84–Arg-92 the chain is on the cytoplasmic side. The helical transmembrane segment at Leu-93–Asn-113 threads the bilayer. Over Pro-114–Asp-115 the chain is Periplasmic. A helical membrane pass occupies residues Ile-116–Ala-136. Residues Pro-137 to Leu-142 lie on the Cytoplasmic side of the membrane. Residues Met-143–Ile-163 form a helical membrane-spanning segment. The Periplasmic segment spans residues Gln-164–Gln-178. Residues Tyr-179–Thr-199 traverse the membrane as a helical segment. Residues Arg-200–Gly-204 are Cytoplasmic-facing. A helical transmembrane segment spans residues Phe-205–Met-225. Topologically, residues Asn-226 to Thr-261 are periplasmic. The chain crosses the membrane as a helical span at residues Ala-262–Val-282. The Cytoplasmic segment spans residues Gly-283–Ser-337. Residues Gly-338 to Pro-358 traverse the membrane as a helical segment. A topological domain (periplasmic) is located at residue Gln-359. The helical transmembrane segment at Phe-360–Ile-380 threads the bilayer. At Leu-381–Asn-392 the chain is on the cytoplasmic side. The chain crosses the membrane as a helical span at residues Leu-393 to Phe-413. Topologically, residues Ser-414–Gln-421 are periplasmic. A helical membrane pass occupies residues Pro-422–Phe-442. Over Asn-443–Glu-482 the chain is Cytoplasmic.

Belongs to the nucleobase:cation symporter-2 (NCS2) (TC 2.A.40) family.

It is found in the cell inner membrane. Inhibited in the presence of the protonophore carbonyl cyanide m-chlorophenyl hydrazone. In terms of biological role, proton-dependent high-capacity transporter for uric acid. Also shows a low capacity for transport of xanthine at 37 degrees Celsius but not at 25 degrees Celsius. This chain is Uric acid transporter UacT (uacT), found in Escherichia coli (strain K12).